A 412-amino-acid polypeptide reads, in one-letter code: Propionate kinase (412 aa).

This sequence belongs to the acetokinase family. PduW subfamily.

The protein localises to the cytoplasm. The enzyme catalyses propanoate + ATP = propanoyl phosphate + ADP. It functions in the pathway polyol metabolism; 1,2-propanediol degradation. Functionally, works with phosphate acetyltransferase (pta) to capture exogenous propionate and regenerate propionyl-CoA during degradation of 1,2-propanediol (1,2-PD). The sequence is that of Propionate kinase from Yersinia enterocolitica serotype O:8 / biotype 1B (strain NCTC 13174 / 8081).